The following is a 91-amino-acid chain: Small ribosomal subunit protein uS19 (91 aa).

The protein belongs to the universal ribosomal protein uS19 family.

Its function is as follows. Protein S19 forms a complex with S13 that binds strongly to the 16S ribosomal RNA. The chain is Small ribosomal subunit protein uS19 from Synechococcus elongatus (strain ATCC 33912 / PCC 7942 / FACHB-805) (Anacystis nidulans R2).